We begin with the raw amino-acid sequence, 1165 residues long: Phenyloxazoline synthase MbtB (1165 aa).

A Carrier 1 domain is found at 5–78 (PARSEDIREE…AWAQLVTAGR (74 aa)). Position 39 is an O-(pantetheine 4'-phosphoryl)serine (Ser39). Positions 77 to 100 (GRQDTDSAAPPADSSGDPSGETEP) are disordered. Residues 97–393 (ETEPFALAPM…SSLLLDVDLV (297 aa)) are condensation/cyclization. Positions 578–973 (SYAQLRDQAL…RVPGVRTAVA (396 aa)) are adenylation. The 77-residue stretch at 1055–1131 (AASTPLEGAL…ALAAVLRAAE (77 aa)) folds into the Carrier 2 domain. Ser1090 carries the O-(pantetheine 4'-phosphoryl)serine modification.

It belongs to the ATP-dependent AMP-binding enzyme family. MbtB subfamily. It depends on pantetheine 4'-phosphate as a cofactor. 4'-phosphopantetheine is transferred from CoA to a specific serine in each of the two carrier protein domains, leading to their activation from apo to holo forms.

It participates in siderophore biosynthesis; mycobactin biosynthesis. Functionally, involved in the initial steps of the mycobactin biosynthetic pathway. Putatively couples activated salicylic acid with serine or threonine and cyclizes this precursor to the hydroxyphenyloxazoline ring system present in this class of siderophores. This is Phenyloxazoline synthase MbtB (mbtB) from Mycolicibacterium paratuberculosis (strain ATCC BAA-968 / K-10) (Mycobacterium paratuberculosis).